The chain runs to 279 residues: Putative Delta(7)-sterol-C5(6)-desaturase 2 (279 aa).

2 helical membrane passes run 48–68 (LAGN…IYYL) and 127–147 (FLCF…IYWV). The Fatty acid hydroxylase domain maps to 134 to 263 (ALYLVLVEFM…TIWMDWMFGS (130 aa)). The short motif at 148–152 (HKELH) is the Histidine box-1 element. Positions 162-166 (HATHH) match the Histidine box-2 motif. The chain crosses the membrane as a helical span at residues 194–214 (HVIALFIVPIHLITHLSLLFL). The Histidine box-3 signature appears at 239 to 243 (HTIHH).

This sequence belongs to the sterol desaturase family. The cofactor is Fe cation.

It localises to the endoplasmic reticulum membrane. It catalyses the reaction a Delta(7)-sterol + 2 Fe(II)-[cytochrome b5] + O2 + 2 H(+) = a Delta(5),Delta(7)-sterol + 2 Fe(III)-[cytochrome b5] + 2 H2O. The polypeptide is Putative Delta(7)-sterol-C5(6)-desaturase 2 (HDF7) (Arabidopsis thaliana (Mouse-ear cress)).